Here is a 605-residue protein sequence, read N- to C-terminus: uncharacterized protein (605 aa).

The disordered stretch occupies residues 111–151; it reads VNVNDGKPNDIELSSTSKTENDPPLSLHTTPDDLQGNGVNV.

The protein localises to the golgi apparatus. This is an uncharacterized protein from Schizosaccharomyces pombe (strain 972 / ATCC 24843) (Fission yeast).